The primary structure comprises 181 residues: MSRIGKLPIMIPAGVEITFGEKNISIKGPKATLVTPKCELLSYEHKEDKIILTCNFDTRESLAQYGLRRTLLANCIEGVTKGFSKTLEVIGVGYRVSVKGNIVELSVGYSHPVHIELPDGITAKAEGQKLTIMGSDKVLVGEMAARIRRIRKPEPYKGKGIKYESEIIRRKAGKSGGKGKK.

This sequence belongs to the universal ribosomal protein uL6 family. In terms of assembly, part of the 50S ribosomal subunit.

Its function is as follows. This protein binds to the 23S rRNA, and is important in its secondary structure. It is located near the subunit interface in the base of the L7/L12 stalk, and near the tRNA binding site of the peptidyltransferase center. This Lawsonia intracellularis (strain PHE/MN1-00) protein is Large ribosomal subunit protein uL6.